Here is a 174-residue protein sequence, read N- to C-terminus: Crossover junction endodeoxyribonuclease RuvC (174 aa).

Catalysis depends on residues aspartate 8, glutamate 67, and aspartate 139. Residues aspartate 8, glutamate 67, and aspartate 139 each contribute to the Mg(2+) site.

This sequence belongs to the RuvC family. In terms of assembly, homodimer which binds Holliday junction (HJ) DNA. The HJ becomes 2-fold symmetrical on binding to RuvC with unstacked arms; it has a different conformation from HJ DNA in complex with RuvA. In the full resolvosome a probable DNA-RuvA(4)-RuvB(12)-RuvC(2) complex forms which resolves the HJ. It depends on Mg(2+) as a cofactor.

It localises to the cytoplasm. The catalysed reaction is Endonucleolytic cleavage at a junction such as a reciprocal single-stranded crossover between two homologous DNA duplexes (Holliday junction).. In terms of biological role, the RuvA-RuvB-RuvC complex processes Holliday junction (HJ) DNA during genetic recombination and DNA repair. Endonuclease that resolves HJ intermediates. Cleaves cruciform DNA by making single-stranded nicks across the HJ at symmetrical positions within the homologous arms, yielding a 5'-phosphate and a 3'-hydroxyl group; requires a central core of homology in the junction. The consensus cleavage sequence is 5'-(A/T)TT(C/G)-3'. Cleavage occurs on the 3'-side of the TT dinucleotide at the point of strand exchange. HJ branch migration catalyzed by RuvA-RuvB allows RuvC to scan DNA until it finds its consensus sequence, where it cleaves and resolves the cruciform DNA. This is Crossover junction endodeoxyribonuclease RuvC from Pseudoalteromonas translucida (strain TAC 125).